A 72-amino-acid polypeptide reads, in one-letter code: Large ribosomal subunit protein bL31 (72 aa).

Positions 16, 18, 38, and 41 each coordinate Zn(2+).

This sequence belongs to the bacterial ribosomal protein bL31 family. Type A subfamily. Part of the 50S ribosomal subunit. The cofactor is Zn(2+).

Functionally, binds the 23S rRNA. The sequence is that of Large ribosomal subunit protein bL31 from Vibrio campbellii (strain ATCC BAA-1116).